The chain runs to 331 residues: Probable serine hydrolase (331 aa).

The disordered stretch occupies residues 1–28 (MGQTRVAATTAAQSPAAELSPETNGQTE). Residues 7–17 (AATTAAQSPAA) are compositionally biased toward low complexity. The region spanning 63–163 (PIIALHGWQD…EVEKLINIDI (101 aa)) is the AB hydrolase-1 domain. Residue serine 138 is part of the active site.

The protein belongs to the AB hydrolase superfamily. Ubiquitously expressed before embryonic stage 11. At stage 11, expression is concentrated in the foregut and posterior midgut. By stage 15, in gastric caeca, pharynx, posterior spiracles and anterior edge of midgut. At the end of embryogenesis, expression is confined to gastric caeca. During third instar larvae, expressed at low levels in gastric caeca, midgut and hindgut and high level in fat body.

Functionally, may have a role in detoxification and digestion during embryogenesis and larval development. The protein is Probable serine hydrolase (kraken) of Drosophila melanogaster (Fruit fly).